The sequence spans 417 residues: UDP-N-acetylglucosamine 1-carboxyvinyltransferase (417 aa).

22–23 (KN) is a phosphoenolpyruvate binding site. R93 contacts UDP-N-acetyl-alpha-D-glucosamine. The Proton donor role is filled by C117. C117 carries the 2-(S-cysteinyl)pyruvic acid O-phosphothioketal modification. Residues 122–126 (RPVDQ), D305, and I327 each bind UDP-N-acetyl-alpha-D-glucosamine.

It belongs to the EPSP synthase family. MurA subfamily.

The protein localises to the cytoplasm. The catalysed reaction is phosphoenolpyruvate + UDP-N-acetyl-alpha-D-glucosamine = UDP-N-acetyl-3-O-(1-carboxyvinyl)-alpha-D-glucosamine + phosphate. The protein operates within cell wall biogenesis; peptidoglycan biosynthesis. Its function is as follows. Cell wall formation. Adds enolpyruvyl to UDP-N-acetylglucosamine. In Chromobacterium violaceum (strain ATCC 12472 / DSM 30191 / JCM 1249 / CCUG 213 / NBRC 12614 / NCIMB 9131 / NCTC 9757 / MK), this protein is UDP-N-acetylglucosamine 1-carboxyvinyltransferase.